The sequence spans 195 residues: Anthranilate synthase component 2 (195 aa).

The region spanning 1-195 (MILIIDNYDS…LKNFLSLSYG (195 aa)) is the Glutamine amidotransferase type-1 domain. 52–54 (GPG) contributes to the L-glutamine binding site. The active-site Nucleophile; for GATase activity is C79. L-glutamine is bound by residues Q83 and 129-130 (SL). Catalysis depends on residues H173 and E175.

In terms of assembly, tetramer of two components I and two components II.

It is found in the plastid. The protein resides in the chloroplast. It catalyses the reaction chorismate + L-glutamine = anthranilate + pyruvate + L-glutamate + H(+). It participates in amino-acid biosynthesis; L-tryptophan biosynthesis; L-tryptophan from chorismate: step 1/5. The protein is Anthranilate synthase component 2 (trpG) of Cyanidium caldarium (Red alga).